A 62-amino-acid polypeptide reads, in one-letter code: Large ribosomal subunit protein eL24 (62 aa).

Cys6, Cys9, Cys32, and Cys36 together coordinate Zn(2+). The C4-type zinc finger occupies 6-36 (CSFCGELLEPGTGLLFAKRDGSTYYFCSSKC).

Belongs to the eukaryotic ribosomal protein eL24 family. In terms of assembly, part of the 50S ribosomal subunit. Forms a cluster with proteins L3 and L14. Requires Zn(2+) as cofactor.

Its function is as follows. Binds to the 23S rRNA. This Methanococcoides burtonii (strain DSM 6242 / NBRC 107633 / OCM 468 / ACE-M) protein is Large ribosomal subunit protein eL24.